The sequence spans 467 residues: Fumarate hydratase class II (467 aa).

Substrate-binding positions include 99–101 (SGT), 130–133 (HPND), 140–142 (SSN), and Thr188. His189 (proton donor/acceptor) is an active-site residue. The active site involves Ser319. Substrate contacts are provided by residues Ser320 and 325–327 (KVN).

This sequence belongs to the class-II fumarase/aspartase family. Fumarase subfamily. As to quaternary structure, homotetramer.

It is found in the cytoplasm. It carries out the reaction (S)-malate = fumarate + H2O. It participates in carbohydrate metabolism; tricarboxylic acid cycle; (S)-malate from fumarate: step 1/1. In terms of biological role, involved in the TCA cycle. Catalyzes the stereospecific interconversion of fumarate to L-malate. In Thermosynechococcus vestitus (strain NIES-2133 / IAM M-273 / BP-1), this protein is Fumarate hydratase class II.